The sequence spans 856 residues: DNA mismatch repair protein MutS (856 aa).

615 to 622 (GPNMGGKS) contributes to the ATP binding site. The span at 798–807 (ETTGHQQAIK) shows a compositional bias: polar residues. The disordered stretch occupies residues 798-817 (ETTGHQQAIKNPSKAPREEQ).

The protein belongs to the DNA mismatch repair MutS family.

In terms of biological role, this protein is involved in the repair of mismatches in DNA. It is possible that it carries out the mismatch recognition step. This protein has a weak ATPase activity. The polypeptide is DNA mismatch repair protein MutS (Photobacterium profundum (strain SS9)).